The primary structure comprises 41 residues: Large ribosomal subunit protein bL36 (41 aa).

Belongs to the bacterial ribosomal protein bL36 family.

The protein is Large ribosomal subunit protein bL36 of Methylobacterium nodulans (strain LMG 21967 / CNCM I-2342 / ORS 2060).